The following is a 479-amino-acid chain: ATP synthase subunit beta (479 aa).

ATP is bound at residue 168–175 (GGAGVGKT).

This sequence belongs to the ATPase alpha/beta chains family. In terms of assembly, F-type ATPases have 2 components, CF(1) - the catalytic core - and CF(0) - the membrane proton channel. CF(1) has five subunits: alpha(3), beta(3), gamma(1), delta(1), epsilon(1). CF(0) has three main subunits: a(1), b(2) and c(9-12). The alpha and beta chains form an alternating ring which encloses part of the gamma chain. CF(1) is attached to CF(0) by a central stalk formed by the gamma and epsilon chains, while a peripheral stalk is formed by the delta and b chains.

The protein localises to the cell membrane. It carries out the reaction ATP + H2O + 4 H(+)(in) = ADP + phosphate + 5 H(+)(out). Produces ATP from ADP in the presence of a proton gradient across the membrane. The catalytic sites are hosted primarily by the beta subunits. The chain is ATP synthase subunit beta from Parafrankia sp. (strain EAN1pec).